A 186-amino-acid chain; its full sequence is Casparian strip membrane protein 3 (186 aa).

Residues 1–26 (MTKSTYVELGEEKTSNQKGNMKRGVS) lie on the Cytoplasmic side of the membrane. A helical transmembrane segment spans residues 27-47 (ILDFILRLIAIVATLASAIAM). The Extracellular segment spans residues 48-74 (GTTDESLPFFTQFVRFRANYDDLPTLR). Residues 75–95 (FFVVASAIVSGYLILSLPLSI) traverse the membrane as a helical segment. Residues 96–107 (LHIIRSSAGMTR) are Cytoplasmic-facing. Residues 108 to 128 (VIFIILDTVMLGLLTAGSSAA) traverse the membrane as a helical segment. Residues 129-161 (ASIVYLAHKGNRKANWFAFCQQYNSFCERISGS) are Extracellular-facing. Residues 162 to 182 (LIGSFIAIPLFIMLILLSALV) form a helical membrane-spanning segment. Residues 183–186 (LSRR) lie on the Cytoplasmic side of the membrane.

The protein belongs to the Casparian strip membrane proteins (CASP) family. As to quaternary structure, homodimer and heterodimers.

It localises to the cell membrane. Its function is as follows. Regulates membrane-cell wall junctions and localized cell wall deposition. Required for establishment of the Casparian strip membrane domain (CSD) and the subsequent formation of Casparian strips, a cell wall modification of the root endodermis that determines an apoplastic barrier between the intraorganismal apoplasm and the extraorganismal apoplasm and prevents lateral diffusion. This chain is Casparian strip membrane protein 3, found in Medicago truncatula (Barrel medic).